A 54-amino-acid polypeptide reads, in one-letter code: Large ribosomal subunit protein bL33 (54 aa).

Belongs to the bacterial ribosomal protein bL33 family.

In Legionella pneumophila (strain Lens), this protein is Large ribosomal subunit protein bL33.